The primary structure comprises 811 residues: Phenylalanine--tRNA ligase beta subunit (811 aa).

Positions 39 to 151 constitute a tRNA-binding domain; that stretch reads RTWAAGVVVG…AGLQAGQPVG (113 aa). The B5 domain maps to 409–495; the sequence is EPEHSITLRL…RLYGYDNFGE (87 aa). Mg(2+) is bound by residues Asp473, Asp479, Glu482, and Glu483. The region spanning 717 to 810 is the FDX-ACB domain; it reads SSFPASDRDL…LVERFRVTLR (94 aa).

This sequence belongs to the phenylalanyl-tRNA synthetase beta subunit family. Type 1 subfamily. In terms of assembly, tetramer of two alpha and two beta subunits. It depends on Mg(2+) as a cofactor.

It localises to the cytoplasm. The enzyme catalyses tRNA(Phe) + L-phenylalanine + ATP = L-phenylalanyl-tRNA(Phe) + AMP + diphosphate + H(+). This chain is Phenylalanine--tRNA ligase beta subunit, found in Synechococcus sp. (strain ATCC 27144 / PCC 6301 / SAUG 1402/1) (Anacystis nidulans).